The chain runs to 204 residues: Thymidylate kinase (204 aa).

The protein belongs to the thymidylate kinase family. Homodimer; the dimer arrangement is orthogonal and not antiparallel as in human enzyme.

It catalyses the reaction dTMP + ATP = dTDP + ADP. The protein operates within pyrimidine metabolism; dTTP biosynthesis. Poxvirus TMP kinase is able to phosphorylate dTMP, dUMP and also dGMP from any purine and pyrimidine nucleoside triphosphate. The large substrate specificity is explained by the presence of a canal connecting the edge of the dimer interface to the TMP base binding pocket, canal not found in the human homolog. The chain is Thymidylate kinase (OPG178) from Cynomys gunnisoni (Gunnison's prairie dog).